The sequence spans 179 residues: Sodium/potassium-transporting ATPase subunit beta-1-interacting protein 3 (179 aa).

Transmembrane regions (helical) follow at residues 5–22, 35–55, 62–82, and 151–171; these read TGRC…LVAL, APIL…FGTI, IVAY…IICF, and AVQI…ISVI.

It belongs to the NKAIN family. As to quaternary structure, interacts with atp1b1 C-terminus.

It localises to the cell membrane. This is Sodium/potassium-transporting ATPase subunit beta-1-interacting protein 3 (nkain3) from Xenopus laevis (African clawed frog).